Consider the following 514-residue polypeptide: tRNA-2-methylthio-N(6)-dimethylallyladenosine synthase (514 aa).

The segment at 1 to 21 is disordered; that stretch reads MNEEQRKASSVDVLAERDKKA. The MTTase N-terminal domain occupies 68–186; sequence RTFLIKTYGC…LPEILEEAYL (119 aa). [4Fe-4S] cluster-binding residues include C77, C113, C147, C223, C227, and C230. Residues 209–440 enclose the Radical SAM core domain; the sequence is REGNIKAWVN…KKVGHYSQIA (232 aa). The TRAM domain occupies 442–505; the sequence is SKYEGQTVTV…QYSLNGSFVK (64 aa).

Belongs to the methylthiotransferase family. MiaB subfamily. In terms of assembly, monomer. [4Fe-4S] cluster is required as a cofactor.

The protein localises to the cytoplasm. It carries out the reaction N(6)-dimethylallyladenosine(37) in tRNA + (sulfur carrier)-SH + AH2 + 2 S-adenosyl-L-methionine = 2-methylsulfanyl-N(6)-dimethylallyladenosine(37) in tRNA + (sulfur carrier)-H + 5'-deoxyadenosine + L-methionine + A + S-adenosyl-L-homocysteine + 2 H(+). In terms of biological role, catalyzes the methylthiolation of N6-(dimethylallyl)adenosine (i(6)A), leading to the formation of 2-methylthio-N6-(dimethylallyl)adenosine (ms(2)i(6)A) at position 37 in tRNAs that read codons beginning with uridine. In Staphylococcus aureus (strain N315), this protein is tRNA-2-methylthio-N(6)-dimethylallyladenosine synthase.